We begin with the raw amino-acid sequence, 306 residues long: tRNA pseudouridine synthase B (306 aa).

Asp46 acts as the Nucleophile in catalysis.

Belongs to the pseudouridine synthase TruB family. Type 1 subfamily.

It carries out the reaction uridine(55) in tRNA = pseudouridine(55) in tRNA. Functionally, responsible for synthesis of pseudouridine from uracil-55 in the psi GC loop of transfer RNAs. The sequence is that of tRNA pseudouridine synthase B from Gluconacetobacter diazotrophicus (strain ATCC 49037 / DSM 5601 / CCUG 37298 / CIP 103539 / LMG 7603 / PAl5).